The sequence spans 477 residues: Glycogen synthase (477 aa).

An ADP-alpha-D-glucose-binding site is contributed by K15.

Belongs to the glycosyltransferase 1 family. Bacterial/plant glycogen synthase subfamily.

It carries out the reaction [(1-&gt;4)-alpha-D-glucosyl](n) + ADP-alpha-D-glucose = [(1-&gt;4)-alpha-D-glucosyl](n+1) + ADP + H(+). It functions in the pathway glycan biosynthesis; glycogen biosynthesis. Its function is as follows. Synthesizes alpha-1,4-glucan chains using ADP-glucose. This chain is Glycogen synthase, found in Citrobacter koseri (strain ATCC BAA-895 / CDC 4225-83 / SGSC4696).